A 104-amino-acid chain; its full sequence is L-rhamnose mutarotase (104 aa).

Y18 serves as a coordination point for substrate. Catalysis depends on H22, which acts as the Proton donor. Residues Y41 and 76–77 (WW) each bind substrate.

This sequence belongs to the rhamnose mutarotase family. In terms of assembly, homodimer.

The protein resides in the cytoplasm. It catalyses the reaction alpha-L-rhamnose = beta-L-rhamnose. Its pathway is carbohydrate metabolism; L-rhamnose metabolism. Involved in the anomeric conversion of L-rhamnose. The protein is L-rhamnose mutarotase of Salmonella heidelberg (strain SL476).